Consider the following 163-residue polypeptide: MRIEKCYFCSGPIYPGHGMMFVRNDCKVFRFCKSKCHKNFKKKRNPRKVRWTKAFRKAAGKELTVDNSFEFEKRRNEPIKYQRELWNKTIDAMKRVEEIKQKRQAKFIMNRLKKNKELQKVQDIKEVKQNIHLIRAPLAGKGKQLEEKMVQQLQEDVDMEDAP.

It belongs to the eukaryotic ribosomal protein eL24 family. As to quaternary structure, associated with nucleolar and cytoplasmic pre-60S particles. At the end of biogenesis it dissociates from cytoplasmic pre-60S particles and is likely to be exchanged for its ribosomal homolog, RPL24.

The protein localises to the nucleus. It localises to the nucleolus. Involved in the biogenesis of the 60S ribosomal subunit. Ensures the docking of GTPBP4/NOG1 to pre-60S particles. The protein is Probable ribosome biogenesis protein RLP24 (RSL24D1) of Homo sapiens (Human).